The following is a 473-amino-acid chain: Photosystem II CP43 reaction center protein (473 aa).

Positions 1–14 (MKTLYSLRRFYPVE) are excised as a propeptide. T15 is modified (N-acetylthreonine). Position 15 is a phosphothreonine (T15). 5 helical membrane passes run 69-93 (LFEV…PHLA), 134-155 (LLGP…KDRN), 178-200 (KALY…RRIT), 255-275 (KPFA…LSYS), and 291-312 (WFNN…ASQA). E367 provides a ligand contact to [CaMn4O5] cluster. Residues 447-471 (RARAAAAGFEKGIDRDFEPVLFMTP) traverse the membrane as a helical segment.

The protein belongs to the PsbB/PsbC family. PsbC subfamily. As to quaternary structure, PSII is composed of 1 copy each of membrane proteins PsbA, PsbB, PsbC, PsbD, PsbE, PsbF, PsbH, PsbI, PsbJ, PsbK, PsbL, PsbM, PsbT, PsbX, PsbY, PsbZ, Psb30/Ycf12, at least 3 peripheral proteins of the oxygen-evolving complex and a large number of cofactors. It forms dimeric complexes. The cofactor is Binds multiple chlorophylls and provides some of the ligands for the Ca-4Mn-5O cluster of the oxygen-evolving complex. It may also provide a ligand for a Cl- that is required for oxygen evolution. PSII binds additional chlorophylls, carotenoids and specific lipids..

Its subcellular location is the plastid. The protein localises to the chloroplast thylakoid membrane. One of the components of the core complex of photosystem II (PSII). It binds chlorophyll and helps catalyze the primary light-induced photochemical processes of PSII. PSII is a light-driven water:plastoquinone oxidoreductase, using light energy to abstract electrons from H(2)O, generating O(2) and a proton gradient subsequently used for ATP formation. This is Photosystem II CP43 reaction center protein from Nuphar advena (Common spatterdock).